A 79-amino-acid chain; its full sequence is Small ribosomal subunit protein bS16c (79 aa).

This sequence belongs to the bacterial ribosomal protein bS16 family.

Its subcellular location is the plastid. It is found in the chloroplast. This Trieres chinensis (Marine centric diatom) protein is Small ribosomal subunit protein bS16c.